The sequence spans 266 residues: Non-structural maintenance of chromosomes element 1 homolog (266 aa).

An interaction with NSMCE3 region spans residues 1-102 (MQGSTRRAGA…SVSKMATDFA (102 aa)). The RING-type; atypical zinc finger occupies 191–232 (CNICHGLLIQGQSCETCGIRMHLPCVAKYFQSIPEPHCPHCN). Positions 246-266 (EKEREAGISKSSRKSLRTRQH) are disordered. Basic residues predominate over residues 256–266 (SSRKSLRTRQH).

Belongs to the NSE1 family. In terms of assembly, component of the SMC5-SMC6 complex which consists at least of SMC5, SMC6, NSMCE2, NSMCE1, NSMCE4A or EID3 and NSMCE3. NSMCE1, NSMCE4A or EID3 and NSMCE3 probably form a subcomplex that bridges the head domains of the SMC5-SMC6 heterodimer. Interacts with NSMCE3. Ubiquitinated.

It is found in the nucleus. The protein localises to the chromosome. It localises to the telomere. It catalyses the reaction S-ubiquitinyl-[E2 ubiquitin-conjugating enzyme]-L-cysteine + [acceptor protein]-L-lysine = [E2 ubiquitin-conjugating enzyme]-L-cysteine + N(6)-ubiquitinyl-[acceptor protein]-L-lysine.. In terms of biological role, RING-type zinc finger-containing E3 ubiquitin ligase that assembles with melanoma antigen protein (MAGE) to catalyze the direct transfer of ubiquitin from E2 ubiquitin-conjugating enzyme to a specific substrate. Within MAGE-RING ubiquitin ligase complex, MAGE stimulates and specifies ubiquitin ligase activity likely through recruitment and/or stabilization of the E2 ubiquitin-conjugating enzyme at the E3:substrate complex. Involved in maintenance of genome integrity, DNA damage response and DNA repair. NSMCE3/MAGEG1 and NSMCE1 ubiquitin ligase are components of SMC5-SMC6 complex and may positively regulate homologous recombination-mediated DNA repair. This is Non-structural maintenance of chromosomes element 1 homolog (Nsmce1) from Mus musculus (Mouse).